Consider the following 177-residue polypeptide: Protein LIGHT-DEPENDENT SHORT HYPOCOTYLS 10 (177 aa).

A compositionally biased stretch (basic and acidic residues) spans 1–10; sequence MSSPRERGKS. 2 disordered regions span residues 1–31 and 144–177; these read MSSPRERGKSLMESSGSEPPVTPSRYESQKR and RGIPYKKKKKKKPTPEMGGGREDSSSSSSSFSFS. In terms of domain architecture, ALOG spans 25 to 152; sequence RYESQKRRDW…ARGIPYKKKK (128 aa). The Nuclear localization signal signature appears at 150–154; the sequence is KKKKK. Low complexity predominate over residues 168–177; sequence SSSSSSFSFS.

Belongs to the plant homeotic and developmental regulators ALOG protein family.

The protein resides in the nucleus. Probable transcription regulator that acts as a developmental regulator by promoting cell growth in response to light. The sequence is that of Protein LIGHT-DEPENDENT SHORT HYPOCOTYLS 10 (LSH10) from Arabidopsis thaliana (Mouse-ear cress).